The sequence spans 156 residues: B3 domain-containing protein At5g26805 (156 aa).

The segment at residues 57 to 155 (KFQLPMEKIR…MFCFSVLDGR (99 aa)) is a DNA-binding region (TF-B3).

Its subcellular location is the nucleus. The protein is B3 domain-containing protein At5g26805 of Arabidopsis thaliana (Mouse-ear cress).